Reading from the N-terminus, the 82-residue chain is U24 protein (82 aa).

A PPXY motif motif is present at residues 7 to 10 (PPSY). The chain crosses the membrane as a helical span at residues 52–72 (FIILACLIISVILCLILILHI).

In terms of assembly, interacts with host ITCH; this interaction probably mediates ITCH degradation. Interacts probably with NEDD4.

The protein resides in the membrane. Functionally, down-regulates of the TCR/CD3E complex and the transferrin receptor TFRC in host T-cells by blocking them from recycling back to the cell surface. The chain is U24 protein from Homo sapiens (Human).